We begin with the raw amino-acid sequence, 101 residues long: NAD(P)H-quinone oxidoreductase subunit 4L, chloroplastic (101 aa).

A run of 3 helical transmembrane segments spans residues 2–22, 32–52, and 61–81; these read MFER…YGLI, ICLE…SDLF, and IFAI…LSIL.

Belongs to the complex I subunit 4L family. NDH is composed of at least 16 different subunits, 5 of which are encoded in the nucleus.

The protein localises to the plastid. It is found in the chloroplast thylakoid membrane. The enzyme catalyses a plastoquinone + NADH + (n+1) H(+)(in) = a plastoquinol + NAD(+) + n H(+)(out). The catalysed reaction is a plastoquinone + NADPH + (n+1) H(+)(in) = a plastoquinol + NADP(+) + n H(+)(out). In terms of biological role, NDH shuttles electrons from NAD(P)H:plastoquinone, via FMN and iron-sulfur (Fe-S) centers, to quinones in the photosynthetic chain and possibly in a chloroplast respiratory chain. The immediate electron acceptor for the enzyme in this species is believed to be plastoquinone. Couples the redox reaction to proton translocation, and thus conserves the redox energy in a proton gradient. The sequence is that of NAD(P)H-quinone oxidoreductase subunit 4L, chloroplastic from Zea mays (Maize).